The following is a 922-amino-acid chain: Coronin-7 (922 aa).

WD repeat units lie at residues 75–115, 124–163, 166–205, and 209–253; these read CHSD…EALP, PEEL…HLTE, AHKD…QASQ, and AHEN…SALA. Residues 386 to 462 form a disordered region; sequence NPAHRPHPRF…TSPSQRSLQS (77 aa). A compositionally biased stretch (low complexity) spans 423 to 456; the sequence is SEGFSSPSSLVSPSTPSSLGLSLSSTSGIGTSPS. A phosphoserine mark is found at Ser-459 and Ser-462. Lys-469 is covalently cross-linked (Glycyl lysine isopeptide (Lys-Gly) (interchain with G-Cter in ubiquitin)). WD repeat units follow at residues 539–579, 589–629, 632–671, and 725–765; these read QNGA…LKNV, GHTE…EQLR, GHQD…LPLQ, and DVAP…PFFL. A disordered region spans residues 854 to 922; it reads LQPPGMTPVS…FEGVDEDEWD (69 aa). Thr-874 is modified (phosphothreonine). Over residues 881–893 the composition is skewed to basic and acidic residues; it reads LEEKSDQQKKEEL. Ser-912 is modified (phosphoserine).

It belongs to the WD repeat coronin family. As to quaternary structure, interacts with clathrin adapter AP1 complex. This interaction takes place at Golgi membranes and not AP1-positive endosomal membranes. Interacts (when ubiquitinated at Lys-469) with EPS15. In terms of processing, the membrane-associated form is phosphorylated on tyrosine residues. Post-translationally, ubiquitinated via 'Lys-33'-linked ubiquitin chains by the BCR(KLHL20) E3 ubiquitin ligase complex: 'Lys-33'-linked ubiquitination promotes interaction with EPS15 and facilitates actin polymerization at the trans-Golgi network, thereby facilitating post-Golgi trafficking. Deubiquitinated by ZRANB1/TRABID.

Its subcellular location is the golgi apparatus membrane. It is found in the golgi apparatus. The protein resides in the trans-Golgi network. It localises to the cytoplasmic vesicle. The protein localises to the cytoplasm. Its subcellular location is the cytosol. In terms of biological role, F-actin regulator involved in anterograde Golgi to endosome transport: upon ubiquitination via 'Lys-33'-linked ubiquitin chains by the BCR(KLHL20) E3 ubiquitin ligase complex, interacts with EPS15 and localizes to the trans-Golgi network, where it promotes actin polymerization, thereby facilitating post-Golgi trafficking. May play a role in the maintenance of the Golgi apparatus morphology. The polypeptide is Coronin-7 (Coro7) (Rattus norvegicus (Rat)).